The following is a 379-amino-acid chain: Chaperone protein DnaJ (379 aa).

Positions 5–69 (EFYDRLGVSK…QKRAAYDQYG (65 aa)) constitute a J domain. Residues 135 to 217 (GAEKEVSYNR…CHGTGHEKKT (83 aa)) form a CR-type zinc finger. The Zn(2+) site is built by cysteine 148, cysteine 151, cysteine 165, cysteine 168, cysteine 191, cysteine 194, cysteine 205, and cysteine 208. CXXCXGXG motif repeat units lie at residues 148 to 155 (CHTCSGSG), 165 to 172 (CQKCHGSG), 191 to 198 (CDVCQGSG), and 205 to 212 (CPTCHGTG).

Belongs to the DnaJ family. As to quaternary structure, homodimer. Requires Zn(2+) as cofactor.

Its subcellular location is the cytoplasm. In terms of biological role, participates actively in the response to hyperosmotic and heat shock by preventing the aggregation of stress-denatured proteins and by disaggregating proteins, also in an autonomous, DnaK-independent fashion. Unfolded proteins bind initially to DnaJ; upon interaction with the DnaJ-bound protein, DnaK hydrolyzes its bound ATP, resulting in the formation of a stable complex. GrpE releases ADP from DnaK; ATP binding to DnaK triggers the release of the substrate protein, thus completing the reaction cycle. Several rounds of ATP-dependent interactions between DnaJ, DnaK and GrpE are required for fully efficient folding. Also involved, together with DnaK and GrpE, in the DNA replication of plasmids through activation of initiation proteins. In Streptococcus agalactiae serotype III (strain NEM316), this protein is Chaperone protein DnaJ.